Here is a 255-residue protein sequence, read N- to C-terminus: 4-hydroxy-tetrahydrodipicolinate reductase (255 aa).

NAD(+) is bound by residues 9–14 (GFKGKM), 89–91 (GTT), and 115–118 (APNF). Histidine 145 serves as the catalytic Proton donor/acceptor. A (S)-2,3,4,5-tetrahydrodipicolinate-binding site is contributed by histidine 146. Residue lysine 149 is the Proton donor of the active site. Residue 155 to 156 (GT) participates in (S)-2,3,4,5-tetrahydrodipicolinate binding.

This sequence belongs to the DapB family.

It is found in the cytoplasm. It carries out the reaction (S)-2,3,4,5-tetrahydrodipicolinate + NAD(+) + H2O = (2S,4S)-4-hydroxy-2,3,4,5-tetrahydrodipicolinate + NADH + H(+). The catalysed reaction is (S)-2,3,4,5-tetrahydrodipicolinate + NADP(+) + H2O = (2S,4S)-4-hydroxy-2,3,4,5-tetrahydrodipicolinate + NADPH + H(+). The protein operates within amino-acid biosynthesis; L-lysine biosynthesis via DAP pathway; (S)-tetrahydrodipicolinate from L-aspartate: step 4/4. Its function is as follows. Catalyzes the conversion of 4-hydroxy-tetrahydrodipicolinate (HTPA) to tetrahydrodipicolinate. The sequence is that of 4-hydroxy-tetrahydrodipicolinate reductase from Streptococcus gordonii (strain Challis / ATCC 35105 / BCRC 15272 / CH1 / DL1 / V288).